Reading from the N-terminus, the 612-residue chain is Dihydroxy-acid dehydratase (612 aa).

A Mg(2+)-binding site is contributed by Asp-81. Position 122 (Cys-122) interacts with [2Fe-2S] cluster. Residues Asp-123 and Lys-124 each contribute to the Mg(2+) site. Residue Lys-124 is modified to N6-carboxylysine. Cys-193 contributes to the [2Fe-2S] cluster binding site. Mg(2+) is bound at residue Glu-489. Ser-515 (proton acceptor) is an active-site residue.

Belongs to the IlvD/Edd family. In terms of assembly, homodimer. [2Fe-2S] cluster is required as a cofactor. It depends on Mg(2+) as a cofactor.

The enzyme catalyses (2R)-2,3-dihydroxy-3-methylbutanoate = 3-methyl-2-oxobutanoate + H2O. It catalyses the reaction (2R,3R)-2,3-dihydroxy-3-methylpentanoate = (S)-3-methyl-2-oxopentanoate + H2O. The protein operates within amino-acid biosynthesis; L-isoleucine biosynthesis; L-isoleucine from 2-oxobutanoate: step 3/4. It functions in the pathway amino-acid biosynthesis; L-valine biosynthesis; L-valine from pyruvate: step 3/4. In terms of biological role, functions in the biosynthesis of branched-chain amino acids. Catalyzes the dehydration of (2R,3R)-2,3-dihydroxy-3-methylpentanoate (2,3-dihydroxy-3-methylvalerate) into 2-oxo-3-methylpentanoate (2-oxo-3-methylvalerate) and of (2R)-2,3-dihydroxy-3-methylbutanoate (2,3-dihydroxyisovalerate) into 2-oxo-3-methylbutanoate (2-oxoisovalerate), the penultimate precursor to L-isoleucine and L-valine, respectively. This is Dihydroxy-acid dehydratase from Stutzerimonas stutzeri (strain A1501) (Pseudomonas stutzeri).